The chain runs to 554 residues: Hedycaryol synthase (554 aa).

Positions 270, 307, 311, 449, and 452 each coordinate (2E,6E)-farnesyl diphosphate. Mg(2+)-binding residues include aspartate 307 and aspartate 311. Positions 307–311 match the DDXXD motif motif; it reads DDTYD. Positions 452, 456, and 460 each coordinate Mg(2+).

The protein belongs to the terpene synthase family. Requires Mg(2+) as cofactor. Specifically expressed in flowers.

The catalysed reaction is (2E,6E)-farnesyl diphosphate + H2O = (2E,6E)-hedycaryol + diphosphate. It participates in secondary metabolite biosynthesis; terpenoid biosynthesis. Functionally, sesquiterpene synthase that catalyzes the formation of sesquiterpenes and sesquiterpenoid alcohols. Converts farnesyl diphosphate (FPP) to hedycaryol. Hedycaryol is likely to be one of the terpenes that attract insects for pollination of Camellia brevistyla. The polypeptide is Hedycaryol synthase (Camellia brevistyla).